A 102-amino-acid chain; its full sequence is UPF0213 protein in potE 3'region (102 aa).

Residues 6–81 (SPWHLYMLRL…KQLSKTQKER (76 aa)) form the GIY-YIG domain.

Belongs to the UPF0213 family.

This is UPF0213 protein in potE 3'region from Serratia liquefaciens.